The sequence spans 335 residues: Methionine import ATP-binding protein MetN 1 (335 aa).

In terms of domain architecture, ABC transporter spans 2–242; sequence IEFQQVHKTY…PQHPTTKRFV (241 aa). An ATP-binding site is contributed by 38-45; sequence GHSGAGKS.

Belongs to the ABC transporter superfamily. Methionine importer (TC 3.A.1.24) family. As to quaternary structure, the complex is composed of two ATP-binding proteins (MetN), two transmembrane proteins (MetI) and a solute-binding protein (MetQ).

It localises to the cell inner membrane. The enzyme catalyses L-methionine(out) + ATP + H2O = L-methionine(in) + ADP + phosphate + H(+). The catalysed reaction is D-methionine(out) + ATP + H2O = D-methionine(in) + ADP + phosphate + H(+). Its function is as follows. Part of the ABC transporter complex MetNIQ involved in methionine import. Responsible for energy coupling to the transport system. The polypeptide is Methionine import ATP-binding protein MetN 1 (Pseudomonas putida (strain ATCC 47054 / DSM 6125 / CFBP 8728 / NCIMB 11950 / KT2440)).